A 372-amino-acid polypeptide reads, in one-letter code: GTPase Obg (372 aa).

The region spanning 1 to 159 (MKFVDEATIE…RRLRLELKVL (159 aa)) is the Obg domain. In terms of domain architecture, OBG-type G spans 160-336 (ADVGLLGLPN…LIWALQDYLD (177 aa)). GTP-binding positions include 166–173 (GLPNAGKS), 191–195 (FTTLH), 213–216 (DIPG), 288–291 (NKLD), and 317–319 (SGL). Mg(2+) is bound by residues Ser173 and Thr193. Residues 341–372 (KEQITQDKADGSYVHEDPRFDTTRDAPPSGKD) form a disordered region.

The protein belongs to the TRAFAC class OBG-HflX-like GTPase superfamily. OBG GTPase family. Monomer. Mg(2+) serves as cofactor.

Its subcellular location is the cytoplasm. Its function is as follows. An essential GTPase which binds GTP, GDP and possibly (p)ppGpp with moderate affinity, with high nucleotide exchange rates and a fairly low GTP hydrolysis rate. Plays a role in control of the cell cycle, stress response, ribosome biogenesis and in those bacteria that undergo differentiation, in morphogenesis control. This is GTPase Obg from Bordetella avium (strain 197N).